A 437-amino-acid chain; its full sequence is Glutamate-1-semialdehyde 2,1-aminomutase (437 aa).

The residue at position 274 (Lys274) is an N6-(pyridoxal phosphate)lysine.

The protein belongs to the class-III pyridoxal-phosphate-dependent aminotransferase family. HemL subfamily. As to quaternary structure, homodimer. The cofactor is pyridoxal 5'-phosphate.

The protein resides in the cytoplasm. The enzyme catalyses (S)-4-amino-5-oxopentanoate = 5-aminolevulinate. Its pathway is porphyrin-containing compound metabolism; protoporphyrin-IX biosynthesis; 5-aminolevulinate from L-glutamyl-tRNA(Glu): step 2/2. This chain is Glutamate-1-semialdehyde 2,1-aminomutase, found in Verminephrobacter eiseniae (strain EF01-2).